Consider the following 87-residue polypeptide: Small ribosomal subunit protein bS20 (87 aa).

The segment at 1 to 26 is disordered; it reads MANIKSAKKRAVQSEKARKHNASRRS.

The protein belongs to the bacterial ribosomal protein bS20 family.

Its function is as follows. Binds directly to 16S ribosomal RNA. This Salmonella typhi protein is Small ribosomal subunit protein bS20.